The sequence spans 214 residues: Pyrrolidone-carboxylate peptidase (214 aa).

Residues glutamate 78, cysteine 141, and histidine 165 contribute to the active site.

It belongs to the peptidase C15 family. In terms of assembly, homotetramer.

It localises to the cytoplasm. It carries out the reaction Release of an N-terminal pyroglutamyl group from a polypeptide, the second amino acid generally not being Pro.. Functionally, removes 5-oxoproline from various penultimate amino acid residues except L-proline. The protein is Pyrrolidone-carboxylate peptidase of Streptococcus pneumoniae (strain 70585).